Here is a 476-residue protein sequence, read N- to C-terminus: MGIDAGTTATPRTLAEKVWDDHVVVSGGANEPDLIYIDLHLVHEVTSPQAFDGLRLAGRPVRRPDLTLATEDHNVPTIDIDKPIADPVSRTQVETLRRNCAEFGVRLYPMGDAEQGIVHVVGPQLGLTQPGMTVVCGDSHTSTHGAFGALAMGIGTSEVEHVLATQTLPLRPFKTMAVNVDGELPAGVTAKDIILALIAKIGTGGGQGHVIEYRGSAIESLSMEGRMTVCNMSIEAGARAGMIAPDDTTYEFLRDRPHAPKGAQWDAAMRYWQQLRTDPGAVFDTEVYLDAASLSPFVTWGTNPGQGVPLAAAVPDPELMTDDAERQAAEKALAYMDLRPGTPMRDIAVDAVFVGSCTNGRIEDLRVVADVLRGRKVAPGVRMLVVPGSMRVRAQAEAEGLGEVFTAAGAEWRQAGCSMCLGMNPDQLAPGERCAATSNRNFEGRQGKGGRTHLVSPAVAAATAVRGTLSAPADLD.

Residues C357, C417, and C420 each coordinate [4Fe-4S] cluster.

It belongs to the aconitase/IPM isomerase family. LeuC type 1 subfamily. Heterodimer of LeuC and LeuD. The cofactor is [4Fe-4S] cluster.

The enzyme catalyses (2R,3S)-3-isopropylmalate = (2S)-2-isopropylmalate. It participates in amino-acid biosynthesis; L-leucine biosynthesis; L-leucine from 3-methyl-2-oxobutanoate: step 2/4. In terms of biological role, catalyzes the isomerization between 2-isopropylmalate and 3-isopropylmalate, via the formation of 2-isopropylmaleate. The chain is 3-isopropylmalate dehydratase large subunit from Mycobacterium avium (strain 104).